Consider the following 270-residue polypeptide: Cystinosin homolog (270 aa).

The PQ-loop 1 domain maps to 9–75 (LEISYEIVGW…LYFSPVIQKQ (67 aa)). A helical transmembrane segment spans residues 14–34 (EIVGWIAFASWSISFYPQLIL). N-linked (GlcNAc...) asparagine glycosylation is present at asparagine 52. 3 helical membrane passes run 93–113 (VAFSIHAVVMTAVTLFQIFIY), 123–143 (LAIGIVVVVWGFAAICFFIAL), and 148–168 (WLWLISIFNSIQVFMTCVKYI). Residues 151–213 (LISIFNSIQV…IQSIDQNSWK (63 aa)) form the PQ-loop 2 domain. Asparagine 174 carries an N-linked (GlcNAc...) asparagine glycan. Helical transmembrane passes span 180 to 200 (TVGWSIGNILLDFTGGLANYL) and 223 to 243 (LLSLISIFFDILFMFQHYVLY). Residues 250–270 (KSPETGEESNEPLIDSSHEHV) form a disordered region.

This sequence belongs to the cystinosin (TC 2.A.43.1) family.

It is found in the lysosome membrane. In terms of biological role, thought to transport cystine out of lysosomes. This chain is Cystinosin homolog, found in Arabidopsis thaliana (Mouse-ear cress).